Here is an 84-residue protein sequence, read N- to C-terminus: uncharacterized protein (84 aa).

A disordered region spans residues 1–21 (MYYRRQGEPQEMYGNGNNSVS). The chain crosses the membrane as a helical span at residues 49 to 69 (YIIYAIVAAILLLLFWLLYKK).

It is found in the membrane. This is an uncharacterized protein from Invertebrate iridescent virus 6 (IIV-6).